The sequence spans 190 residues: Protein E6C (190 aa).

Over residues 1–15 (MFGVAKPPPSPIPKP) the composition is skewed to pro residues. Disordered regions lie at residues 1 to 110 (MFGV…EGRR) and 160 to 190 (PRTPGPVAPIPELPGEADDPPTRTPPPPPDD). Over residues 36 to 46 (ARQRASTRHRP) the composition is skewed to basic residues. 2 stretches are compositionally biased toward pro residues: residues 162–171 (TPGPVAPIPE) and 181–190 (TRTPPPPPDD).

This Equus caballus (Horse) protein is Protein E6C (13).